The sequence spans 206 residues: MSFTDDHDHAACQRPLERVRPFDAAAFERAVADMLTASGIAIDPIHTGKTAQRVRELWQKRLLDGYDTVPAEALGSGFADERRDMVVIRSLAVHGMCPHHLLPFRGVAHVAYLPGGRLHGFGRIARMVDAISHRYTYQEWITHEIARTLVEHGEARGAACLIEAEQLCLLMGENRRGDERVITQCYAGDFETDAEARNQFLRAIER.

Zn(2+) contacts are provided by Cys97, His100, and Cys168.

It belongs to the GTP cyclohydrolase I family. In terms of assembly, toroid-shaped homodecamer, composed of two pentamers of five dimers.

The enzyme catalyses GTP + H2O = 7,8-dihydroneopterin 3'-triphosphate + formate + H(+). It functions in the pathway cofactor biosynthesis; 7,8-dihydroneopterin triphosphate biosynthesis; 7,8-dihydroneopterin triphosphate from GTP: step 1/1. The polypeptide is GTP cyclohydrolase 1 (Chromobacterium violaceum (strain ATCC 12472 / DSM 30191 / JCM 1249 / CCUG 213 / NBRC 12614 / NCIMB 9131 / NCTC 9757 / MK)).